Consider the following 122-residue polypeptide: Large ribosomal subunit protein uL14 (122 aa).

Belongs to the universal ribosomal protein uL14 family. As to quaternary structure, part of the 50S ribosomal subunit. Forms a cluster with proteins L3 and L19. In the 70S ribosome, L14 and L19 interact and together make contacts with the 16S rRNA in bridges B5 and B8.

Functionally, binds to 23S rRNA. Forms part of two intersubunit bridges in the 70S ribosome. This is Large ribosomal subunit protein uL14 from Geobacillus kaustophilus (strain HTA426).